The following is a 146-amino-acid chain: Large ribosomal subunit protein bL9 (146 aa).

It belongs to the bacterial ribosomal protein bL9 family. As to quaternary structure, part of the 50S ribosomal subunit. Contacts protein L31.

Functionally, binds to the 23S rRNA and protein L31. This chain is Large ribosomal subunit protein bL9 (rplI), found in Deinococcus radiodurans (strain ATCC 13939 / DSM 20539 / JCM 16871 / CCUG 27074 / LMG 4051 / NBRC 15346 / NCIMB 9279 / VKM B-1422 / R1).